Consider the following 107-residue polypeptide: Ferredoxin Fdx8 (107 aa).

2 consecutive 4Fe-4S ferredoxin-type domains span residues 1-31 and 50-79; these read MAYVIAEPCVATCDTACVPVCPVDCIHGPLA and LQLYIDPESCICCGACENECPVGAIFDEDE. Residues Cys-9, Cys-13, Cys-17, Cys-21, Cys-59, Cys-62, Cys-65, and Cys-69 each coordinate [4Fe-4S] cluster.

Requires [4Fe-4S] cluster as cofactor.

Ferredoxins are iron-sulfur proteins that transfer electrons in a wide variety of metabolic reactions. Fdx2 can receive electrons from both FdR_A and FdR_B ferredoxin reductases, with a preference for FdR_B compared with FdR_A, and transfer the electrons to the cytochrome P450 CYP260A1. This is Ferredoxin Fdx8 from Sorangium cellulosum (strain So ce56) (Polyangium cellulosum (strain So ce56)).